A 741-amino-acid polypeptide reads, in one-letter code: Eukaryotic peptide chain release factor GTP-binding subunit (741 aa).

Residues 5–135 are several sort of repeats; that stretch reads QQQQQQFNAN…SYNNNNNYNN (131 aa). The span at 59–161 shows a compositional bias: low complexity; it reads QQFGQYGQQQ…DQQQETGSGQ (103 aa). 2 disordered regions span residues 59 to 186 and 199 to 264; these read QQFG…KKVL and IVTK…KTEA. The tract at residues 162 to 311 is charged; it reads MSLEDYQKQQ…EQIDASIVND (150 aa). 2 stretches are compositionally biased toward basic and acidic residues: residues 166–175 and 202–241; these read DYQKQQKESL and KKKE…ESKV. The region spanning 316-541 is the tr-type G domain; that stretch reads KDHMSIIFMG…YLDSMPLAVR (226 aa). The segment at 325–332 is G1; sequence GHVDAGKS. A GTP-binding site is contributed by 325-332; sequence GHVDAGKS. Positions 381–385 are G2; the sequence is GKTIE. Thr-399 carries the phosphothreonine modification. Residues 402 to 405 are G3; it reads DAPG. GTP-binding positions include 402-406 and 464-467; these read DAPGH and NKMD. The segment at 464-467 is G4; it reads NKMD. The tract at residues 505 to 507 is G5; it reads SGY.

The protein belongs to the TRAFAC class translation factor GTPase superfamily. Classic translation factor GTPase family. ERF3 subfamily.

It is found in the cytoplasm. Its function is as follows. Involved in translation termination. Stimulates the activity of ERF1. Binds guanine nucleotides. This is Eukaryotic peptide chain release factor GTP-binding subunit (SUP2) from Ogataea pini (Yeast).